A 417-amino-acid polypeptide reads, in one-letter code: Putative competence-damage inducible protein (417 aa).

This sequence belongs to the CinA family.

The chain is Putative competence-damage inducible protein from Leuconostoc citreum (strain KM20).